The following is a 473-amino-acid chain: MIKEELIVKTTALPQSRIALELEIPSNTCKSCVNETINSISRSAKIPGFRLGKIPKQVLIQRIGITQLHASALEKIIDKSWNQALKMESIEPLSEPELVDGFESILKFFNPEKPLKITLQTDIAPEFKLKKSKGLSVEIKKSKFDPKSIDEALEKSRNQLANIIPVNNRPAKLGDIAVVSFKGVYKDSKKEIDGGSSDSMDLELEKNKMIPGFVEGIVGMKIDDNKTLTLRFPEDYSHEDSRGKEAIFDISLKDLKEKELPELNDDFAKQSGNKDSLKELKKDIEKQLKENFDNTQKNIKVEALMDALSKELDAEIPKAMIDIEVRNNIEQTAQRFAQQGMDIKSTFTPELVKSLAESTRPQAEKNVQRNLALKALSEREKITVDNEEIDQKMKEYEDEISKSPKQIDIQKLKDVVRNDLLQEKLITWLEENSAVKEINEKATKLTTKTTTKATTKKGVKTKSKPKVNKKEKN.

Residues Gly174–Pro261 form the PPIase FKBP-type domain. The disordered stretch occupies residues Ala442–Asn473. Positions Lys444–Ala453 are enriched in low complexity. Residues Thr454 to Val467 show a composition bias toward basic residues.

It belongs to the FKBP-type PPIase family. Tig subfamily.

The protein resides in the cytoplasm. The catalysed reaction is [protein]-peptidylproline (omega=180) = [protein]-peptidylproline (omega=0). Its function is as follows. Involved in protein export. Acts as a chaperone by maintaining the newly synthesized protein in an open conformation. Functions as a peptidyl-prolyl cis-trans isomerase. The chain is Trigger factor from Prochlorococcus marinus subsp. pastoris (strain CCMP1986 / NIES-2087 / MED4).